The sequence spans 289 residues: Ribosome-inactivating protein alpha-trichosanthin (289 aa).

The N-terminal stretch at Met1–Gly23 is a signal peptide. Glu183 is an active-site residue. The propeptide at Ala271–Ile289 is removed in mature form.

This sequence belongs to the ribosome-inactivating protein family. Type 1 RIP subfamily.

It carries out the reaction Endohydrolysis of the N-glycosidic bond at one specific adenosine on the 28S rRNA.. In terms of biological role, inactivates eukaryotic 60S ribosomal subunits. The polypeptide is Ribosome-inactivating protein alpha-trichosanthin (Trichosanthes kirilowii (Chinese snake gourd)).